The following is a 148-amino-acid chain: 1,4-dihydroxy-2-naphthoyl-CoA hydrolase (148 aa).

Asp-15 is an active-site residue.

It belongs to the 4-hydroxybenzoyl-CoA thioesterase family. DHNA-CoA hydrolase subfamily.

It carries out the reaction 1,4-dihydroxy-2-naphthoyl-CoA + H2O = 1,4-dihydroxy-2-naphthoate + CoA + H(+). Its pathway is cofactor biosynthesis; phylloquinone biosynthesis. It participates in quinol/quinone metabolism; 1,4-dihydroxy-2-naphthoate biosynthesis; 1,4-dihydroxy-2-naphthoate from chorismate: step 7/7. Its function is as follows. Catalyzes the hydrolysis of 1,4-dihydroxy-2-naphthoyl-CoA (DHNA-CoA) to 1,4-dihydroxy-2-naphthoate (DHNA), a reaction involved in phylloquinone (vitamin K1) biosynthesis. The sequence is that of 1,4-dihydroxy-2-naphthoyl-CoA hydrolase from Nostoc punctiforme (strain ATCC 29133 / PCC 73102).